The primary structure comprises 498 residues: MIDSLSFTTMPVVLLVGLVLYQLLAFTYRLFFSPLAKFPGQKIAGMTHWYEFYHDVIRRGQYTFHIRDMHKKYGPILRINPYELHISDPSFYNEIYAVQNRRRDRWEWSTRPGGFGGSVGGTNPHELHRRRRAALNPFFSRANIRKLQHEIDQKAVQLVERLEKETDRVIKVNHAFAALTNDIVMQYSFGRDDNRAAHKDRAARALPMEMLSKISSVVAMFWQEKQSITEEVRQILNGTNKAYKERPNRTIYHGILESKLPPEEKELNRLAEEAQITIGAGTLATAWVMSVGMYHLLAPGSVSMLKTLREELQRAIPDPSEPIDLAALEKLPYLTGVVKECLRLGNGTTTRLQRIAPDETLIYTDPNTGKVWDIPPGTPVSLSSLHIHHDETIFADPESFRPERWIENPDLERYLLTFSKGSRQCLGIHLAYAEMYIVLARVFRLYGRKEEGPSKGPSDKLGNLELFETELRDTLCVADLVVPAVWEGSQGIRIKVTE.

The chain crosses the membrane as a helical span at residues phenylalanine 7–threonine 27. Residues asparagine 237, asparagine 248, and asparagine 346 are each glycosylated (N-linked (GlcNAc...) asparagine). Cysteine 425 contributes to the heme binding site.

It belongs to the cytochrome P450 family. Heme is required as a cofactor.

The protein localises to the membrane. The catalysed reaction is preasperterpenoid A + 4 reduced [NADPH--hemoprotein reductase] + 4 O2 = asperterpenoid A + 4 oxidized [NADPH--hemoprotein reductase] + 5 H2O + 5 H(+). It catalyses the reaction asperterpenoid A + 2 reduced [NADPH--hemoprotein reductase] + 2 O2 = asperterpenoid B + 2 oxidized [NADPH--hemoprotein reductase] + 3 H2O + 3 H(+). It participates in secondary metabolite biosynthesis; terpenoid biosynthesis. Functionally, cytochrome P450 monooxygenase; part of the gene cluster that mediates the biosynthesis of the asperterpenoids, sesterterpenes that exhibit anti-tuberculosis activity. The first step of the pathway is performed by the sesterterpene synthase astC that possesses both prenyl transferase and terpene cyclase activity, converting isopentenyl diphosphate and dimethylallyl diphosphate into geranylfarnesyl diphosphate (GFPP) and further converting GFPP into preasperterpenoid A, respectively. The cytochrome P450 monooxygenase astB then dually oxidizes preasperterpenoid A to produce asperterpenoid A along with a minor product, asperterpenoid B. Finally, the cytochrome P450 monooxygenase astA converts asperterpenoid A into asperterpenoid C. The protein is Cytochrome P450 monooxygenase astB of Talaromyces wortmannii (Penicillium wortmannii).